The primary structure comprises 466 residues: Gamma-aminobutyric acid receptor subunit gamma-2 (466 aa).

Positions 1–38 are cleaved as a signal peptide; that stretch reads MSSPNTWSTGSTVYSPVFSQKMTLWILLLLSLYPGFTS. The Extracellular segment spans residues 39-274; it reads QKSDDDYEDY…FDLSRRMGYF (236 aa). Asn-51 and Asn-128 each carry an N-linked (GlcNAc...) asparagine glycan. A disulfide bridge connects residues Cys-189 and Cys-203. N-linked (GlcNAc...) asparagine glycosylation occurs at Asn-246. The chain crosses the membrane as a helical span at residues 275–295; the sequence is TIQTYIPCTLIVVLSWVSFWI. At 296–301 the chain is on the cytoplasmic side; it reads NKDAVP. Residues 302-321 form a helical membrane-spanning segment; that stretch reads ARTSLGITTVLTMTTLSTIA. Residues 322-333 are Extracellular-facing; the sequence is RKSLPKVSYVTA. Residues 334–358 traverse the membrane as a helical segment; the sequence is MDLFVSVCFIFVFSALVEYGTLHYF. Topologically, residues 359–442 are cytoplasmic; sequence VSNRKPSKDK…IHIRIAKMDS (84 aa). A helical membrane pass occupies residues 443–463; it reads YARIFFPTAFCLFNLVYWVSY. Residues 464-466 lie on the Extracellular side of the membrane; the sequence is LYL.

Belongs to the ligand-gated ion channel (TC 1.A.9) family. Gamma-aminobutyric acid receptor (TC 1.A.9.5) subfamily. GABRG2 sub-subfamily. As to quaternary structure, heteropentamer, formed by a combination of alpha (GABRA1-6), beta (GABRB1-3), gamma (GABRG1-3), delta (GABRD), epsilon (GABRE), rho (GABRR1-3), pi (GABRP) and theta (GABRQ) chains, each subunit exhibiting distinct physiological and pharmacological properties. Interacts with GABARAP. Interacts with KIF21B. Identified in a complex of 720 kDa composed of LHFPL4, NLGN2, GABRA1, GABRB2, GABRG2 and GABRB3. Interacts with LHFPL4. Interacts with SHISA7; interaction leads to the regulation of GABA(A) receptor trafficking, channel deactivation kinetics and pharmacology. Post-translationally, palmitoylated by ZDHHC3/GODZ; required for the accumulation of GABA(A) receptors at the postsynaptic membrane of inhibitory GABAergic synapses. Glycosylated. As to expression, expressed in brain (at protein level). Expressed in lungs, in alveolar epithelium.

Its subcellular location is the postsynaptic cell membrane. The protein localises to the cell membrane. It is found in the cell projection. It localises to the dendrite. The protein resides in the cytoplasmic vesicle membrane. It carries out the reaction chloride(in) = chloride(out). Its activity is regulated as follows. Allosterically activated by benzodiazepines. Activated by pentobarbital. Inhibited by the antagonist bicuculline. Inhibited by zinc ions. Potentiated by histamine. Functionally, gamma subunit of the heteropentameric ligand-gated chloride channel gated by gamma-aminobutyric acid (GABA), a major inhibitory neurotransmitter in the brain. GABA-gated chloride channels, also named GABA(A) receptors (GABAAR), consist of five subunits arranged around a central pore and contain GABA active binding site(s) located at the alpha and beta subunit interface(s). When activated by GABA, GABAARs selectively allow the flow of chloride anions across the cell membrane down their electrochemical gradient. Gamma-2/GABRG2-containing GABAARs are found at both synaptic and extrasynaptic sites. Chloride influx into the postsynaptic neuron following GABAAR opening decreases the neuron ability to generate a new action potential, thereby reducing nerve transmission. GABAARs containing alpha-1 and beta-2 or -3 subunits exhibit synaptogenic activity; the gamma-2 subunit being necessary but not sufficient to induce rapid synaptic contacts formation. Extrasynaptic gamma-2-containing receptors contribute to the tonic GABAergic inhibition. GABAARs function also as histamine receptor where histamine binds at the interface of two neighboring beta subunits and potentiates GABA response in a gamma-2 subunit-controlled manner. The protein is Gamma-aminobutyric acid receptor subunit gamma-2 of Rattus norvegicus (Rat).